Consider the following 121-residue polypeptide: Small ribosomal subunit protein uS13 (121 aa).

The tract at residues L95 to K121 is disordered. Residues A106 to K121 show a composition bias toward basic residues.

This sequence belongs to the universal ribosomal protein uS13 family. As to quaternary structure, part of the 30S ribosomal subunit. Forms a loose heterodimer with protein S19. Forms two bridges to the 50S subunit in the 70S ribosome.

In terms of biological role, located at the top of the head of the 30S subunit, it contacts several helices of the 16S rRNA. In the 70S ribosome it contacts the 23S rRNA (bridge B1a) and protein L5 of the 50S subunit (bridge B1b), connecting the 2 subunits; these bridges are implicated in subunit movement. Contacts the tRNAs in the A and P-sites. This chain is Small ribosomal subunit protein uS13, found in Streptococcus thermophilus (strain CNRZ 1066).